Here is a 71-residue protein sequence, read N- to C-terminus: Bowman-Birk type trypsin inhibitor (71 aa).

Cystine bridges form between cysteine 10–cysteine 67, cysteine 11–cysteine 27, cysteine 14–cysteine 63, cysteine 17–cysteine 25, cysteine 35–cysteine 42, and cysteine 39–cysteine 55.

Belongs to the Bowman-Birk serine protease inhibitor family.

Functionally, inhibits trypsin but not chymotrypsin. The chain is Bowman-Birk type trypsin inhibitor from Triticum aestivum (Wheat).